Reading from the N-terminus, the 1017-residue chain is MGNLTMSRRTFVKTAAITGAAAAAFGASTHTALAEETYSSVSGNDTVAVKTCCRGCGKMECGVKVIVQNGRAIRVEGDEGAFQSMGNCCTKSQSSIQAAYHPDRLHYPMKRTNPKGEEPGWQRISWDEAMQSIVDNFMDIKAKHGGEAIACQVGTSRIWCMHSESILKNMLETPNNVEAWQICKGPRHFATTMVSQFAMSWMETITRPKVYVQWGGASELSNYDDSCRTTVDVASRADVHISVDPRMANMGKEADYWQHLRPGTDGALALAWTNVIIEKKLYDELYVKKWTNAPFLVCEDMEPSGFPTVRTDGSYWDVKTALLKESDIKEGGSPYKFLVYDNNWEKLKAEGVEHEYGAFTWFNADQEGVIDETGGFWEGENYDSEKARQGREAAQDNLLPGQTQGWLPDPMPFDPAIDPALEGEFEITLKDGKTVKVKPVWEHYKARAAEYKPEVAAEITGIPASEIEAAATAYGTRIDPSTGYGNGGIQYMLAVEHFCSAIQNCRAFDNLVGITGNMDTPGGNRGPTIVPIDGDLQGFSAWAPGATTPPEEVNRKQIGIDKFPLLGWWQYWCDSHSLWDAVITGDPYPVRALWNESGNFMSQTNTTRAWEALCSLDFYVDLNLWHTPQNDTADIILPVAHWIELNSPRASQGSAGAMGATVKCVQPPAEAKYDPEIVMDLARRMNWKWTDEPGNEWPDINWQLDDSIKLLTDDELTYTTWHVENGKPTFERHGVPMAEVTPKYKTWDEYVKAFQEHGWWQAKDIEPRNWGTYRRYQTGAMRARDRVWGRLDYTAGKGIGDWKPGWFTPTMKQEIWSTVMESHHPDHPEWRLPTYTEPPHGPKDGDRIKEYPLTATTGRRIPVYFHSEHRQLPWCRELWPVPRVEINPKTAAEYGIEQGDWVWIETEWGKIREVADLYYGVKEDVINLEHTWWYPEVKDAGHGWQFSQVNQLIDHYAQDPHSGTSNLRAYQVKIYKATPENSPFNNPVPCDSTGTPIIHTSDDPRLKEWLPTYEGRE.

The tat-type signal signal peptide spans 1 to 34; it reads MGNLTMSRRTFVKTAAITGAAAAAFGASTHTALA. Residues 45–103 enclose the 4Fe-4S Mo/W bis-MGD-type domain; sequence DTVAVKTCCRGCGKMECGVKVIVQNGRAIRVEGDEGAFQSMGNCCTKSQSSIQAAYHPD. Residues C53, C56, C61, and C89 each contribute to the [4Fe-4S] cluster site. Catalysis depends on K91, which acts as the Electron donor/acceptor.

This sequence belongs to the prokaryotic molybdopterin-containing oxidoreductase family. [4Fe-4S] cluster serves as cofactor. It depends on Mo-bis(molybdopterin guanine dinucleotide) as a cofactor. Predicted to be exported by the Tat system. The position of the signal peptide cleavage has not been experimentally proven.

It carries out the reaction dopamine + AH2 = 3-tyramine + A + H2O. Involved in drug metabolism, as part of an interspecies gut bacterial pathway for Levodopa (L-dopa) metabolism, acting on dopamine produced by Enterecoccus L-dopa decarboxylase. Removes the para hydroxyl group of dopamine to produce m-tyramine (3-tyramine). It is possible that dopamine dehydroxylation influences the multiple side effects of L-dopa administration linked to dopamine production in the treatment of Parkinson's disease. This is Dopamine dehydroxylase from Eggerthella lenta (Eubacterium lentum).